The following is a 281-amino-acid chain: Pantothenate synthetase (281 aa).

Residue 30–37 (MGYLHEGH) coordinates ATP. The Proton donor role is filled by histidine 37. Glutamine 61 serves as a coordination point for (R)-pantoate. Glutamine 61 provides a ligand contact to beta-alanine. Position 147–150 (147–150 (GQKD)) interacts with ATP. Glutamine 153 is a binding site for (R)-pantoate. ATP-binding positions include valine 176 and 184 to 187 (MSSR).

It belongs to the pantothenate synthetase family. As to quaternary structure, homodimer.

It localises to the cytoplasm. It catalyses the reaction (R)-pantoate + beta-alanine + ATP = (R)-pantothenate + AMP + diphosphate + H(+). It participates in cofactor biosynthesis; (R)-pantothenate biosynthesis; (R)-pantothenate from (R)-pantoate and beta-alanine: step 1/1. Its function is as follows. Catalyzes the condensation of pantoate with beta-alanine in an ATP-dependent reaction via a pantoyl-adenylate intermediate. In Caldicellulosiruptor saccharolyticus (strain ATCC 43494 / DSM 8903 / Tp8T 6331), this protein is Pantothenate synthetase.